Reading from the N-terminus, the 249-residue chain is Enolase-phosphatase E1 (249 aa).

2 residues coordinate Mg(2+): Asp-14 and Glu-16. Residues 141-142 (SS) and Lys-175 each bind substrate. Asp-200 serves as a coordination point for Mg(2+).

The protein belongs to the HAD-like hydrolase superfamily. MasA/MtnC family. As to quaternary structure, monomer. Mg(2+) is required as a cofactor.

Its subcellular location is the cytoplasm. The protein localises to the nucleus. The enzyme catalyses 5-methylsulfanyl-2,3-dioxopentyl phosphate + H2O = 1,2-dihydroxy-5-(methylsulfanyl)pent-1-en-3-one + phosphate. It functions in the pathway amino-acid biosynthesis; L-methionine biosynthesis via salvage pathway; L-methionine from S-methyl-5-thio-alpha-D-ribose 1-phosphate: step 3/6. Its pathway is amino-acid biosynthesis; L-methionine biosynthesis via salvage pathway; L-methionine from S-methyl-5-thio-alpha-D-ribose 1-phosphate: step 4/6. In terms of biological role, bifunctional enzyme that catalyzes the enolization of 2,3-diketo-5-methylthiopentyl-1-phosphate (DK-MTP-1-P) into the intermediate 2-hydroxy-3-keto-5-methylthiopentenyl-1-phosphate (HK-MTPenyl-1-P), which is then dephosphorylated to form the acireductone 1,2-dihydroxy-3-keto-5-methylthiopentene (DHK-MTPene). The protein is Enolase-phosphatase E1 of Drosophila mojavensis (Fruit fly).